A 173-amino-acid chain; its full sequence is ATP-dependent protease subunit HslV (173 aa).

Threonine 2 is a catalytic residue. Positions 158, 161, and 164 each coordinate Na(+).

Belongs to the peptidase T1B family. HslV subfamily. In terms of assembly, a double ring-shaped homohexamer of HslV is capped on each side by a ring-shaped HslU homohexamer. The assembly of the HslU/HslV complex is dependent on binding of ATP.

The protein localises to the cytoplasm. The catalysed reaction is ATP-dependent cleavage of peptide bonds with broad specificity.. Its activity is regulated as follows. Allosterically activated by HslU binding. Its function is as follows. Protease subunit of a proteasome-like degradation complex believed to be a general protein degrading machinery. This chain is ATP-dependent protease subunit HslV, found in Mannheimia succiniciproducens (strain KCTC 0769BP / MBEL55E).